Reading from the N-terminus, the 740-residue chain is Catalase-peroxidase (740 aa).

A compositionally biased stretch (basic and acidic residues) spans 1–14 (MTENHDAIVTDAKS). The disordered stretch occupies residues 1 to 21 (MTENHDAIVTDAKSEGSGGCP). Residues 108-231 (WHSAGTYRIS…LGAVQMGLIY (124 aa)) constitute a cross-link (tryptophyl-tyrosyl-methioninium (Trp-Tyr) (with M-257)). Residue H109 is the Proton acceptor of the active site. The segment at residues 231–257 (YVNPEGPNGNPDPIAAARDIRETFRRM) is a cross-link (tryptophyl-tyrosyl-methioninium (Tyr-Met) (with W-108)). H272 serves as a coordination point for heme b.

It belongs to the peroxidase family. Peroxidase/catalase subfamily. In terms of assembly, homodimer. Heme b serves as cofactor. In terms of processing, formation of the three residue Trp-Tyr-Met cross-link is important for the catalase, but not the peroxidase activity of the enzyme.

It carries out the reaction H2O2 + AH2 = A + 2 H2O. It catalyses the reaction 2 H2O2 = O2 + 2 H2O. In terms of biological role, bifunctional enzyme with both catalase and broad-spectrum peroxidase activity. This chain is Catalase-peroxidase, found in Streptomyces reticuli.